The primary structure comprises 448 residues: MANVVENLGKLERRVTISLPKDTVQKEIDARIQKLAKNVRMPGFRPGKVPLKMVAQQYAGQVEAEVLSDKIGQEFFTISRAENLRVAGQPSFEPKQEQAEDAYAFDATFEVYPEVKIGDLATAEVERSTTSIGDAEIDRTLDILRKQRVHYHARGEAGEHGDGGADTAAKNGDRVTVDFVGKIDDVAFQGGTAEDFPFVLGEGRMLPEFETAALGLKVGEARTFDLKFPDDYHGKDVAGKTAQFTVTMKKIEWPHMPEIDAEFAKSLGIEDGDLTKMRAEIKENLEREAKRRTQSIVKNQVMDALLKISELDVPKALIEQDQQRLVEMARQDLAQRGVPNAKDAPIPAEMFAEQAERRVKLGLVLAELVKANGLEAKPEQIRAEVDEFAKSYEDPKEVVRWYYSNQQRLAEMEAFVVESNVVEFVLGKAKVTDKEVSFEALASASAQA.

The PPIase FKBP-type domain maps to Gly-172–Pro-257.

The protein belongs to the FKBP-type PPIase family. Tig subfamily.

The protein resides in the cytoplasm. The enzyme catalyses [protein]-peptidylproline (omega=180) = [protein]-peptidylproline (omega=0). In terms of biological role, involved in protein export. Acts as a chaperone by maintaining the newly synthesized protein in an open conformation. Functions as a peptidyl-prolyl cis-trans isomerase. The sequence is that of Trigger factor from Burkholderia vietnamiensis (strain G4 / LMG 22486) (Burkholderia cepacia (strain R1808)).